Here is a 255-residue protein sequence, read N- to C-terminus: MTRTNDASGGGKLPRKRFYRARAHSNPLSDSHFPVPISPEEVDLSQHYPRYFPADKGSDGEEAAAPQQIRFADVGCGFGGLLVGLSPLFPDTLMIGMELRDKVTEYVKERILALRGANPGQYDNISVVRTNSMKYIPNYFRKAQLTKMFFLFPDPHFKEKNHRRRVISMQLLDEYAYVMEVGGIIYTITDVEELGEWMRSCLEKHPLFETVPEEEIKADPVFKLLSTATEESQKVARNGGQTFYAIFRRISLQEE.

Residues Met1–Val35 form a disordered region. The segment covering Leu13–Ala23 has biased composition (basic residues). S-adenosyl-L-methionine contacts are provided by residues Gly75, Glu98–Leu99, Asn131–Ser132, and Leu151. The active site involves Asp154. Thr229–Glu231 is an S-adenosyl-L-methionine binding site.

It belongs to the class I-like SAM-binding methyltransferase superfamily. TrmB family.

The protein resides in the nucleus. The enzyme catalyses guanosine(46) in tRNA + S-adenosyl-L-methionine = N(7)-methylguanosine(46) in tRNA + S-adenosyl-L-homocysteine. The protein operates within tRNA modification; N(7)-methylguanine-tRNA biosynthesis. Its function is as follows. Catalyzes the formation of N(7)-methylguanine at position 46 (m7G46) in tRNA. The chain is tRNA (guanine-N(7)-)-methyltransferase from Zea mays (Maize).